A 499-amino-acid polypeptide reads, in one-letter code: UDP-N-acetylmuramoyl-L-alanyl-D-glutamate--2,6-diaminopimelate ligase (499 aa).

Serine 32 is a binding site for UDP-N-acetyl-alpha-D-muramoyl-L-alanyl-D-glutamate. 117–123 (GTNGKTT) lines the ATP pocket. UDP-N-acetyl-alpha-D-muramoyl-L-alanyl-D-glutamate contacts are provided by residues 159-160 (TT), serine 186, glutamine 192, and arginine 194. Residue lysine 226 is modified to N6-carboxylysine. Meso-2,6-diaminopimelate is bound by residues arginine 394, 418 to 421 (DNPR), glycine 469, and glutamate 473. A Meso-diaminopimelate recognition motif motif is present at residues 418–421 (DNPR).

It belongs to the MurCDEF family. MurE subfamily. The cofactor is Mg(2+). Post-translationally, carboxylation is probably crucial for Mg(2+) binding and, consequently, for the gamma-phosphate positioning of ATP.

Its subcellular location is the cytoplasm. The catalysed reaction is UDP-N-acetyl-alpha-D-muramoyl-L-alanyl-D-glutamate + meso-2,6-diaminopimelate + ATP = UDP-N-acetyl-alpha-D-muramoyl-L-alanyl-gamma-D-glutamyl-meso-2,6-diaminopimelate + ADP + phosphate + H(+). It participates in cell wall biogenesis; peptidoglycan biosynthesis. Catalyzes the addition of meso-diaminopimelic acid to the nucleotide precursor UDP-N-acetylmuramoyl-L-alanyl-D-glutamate (UMAG) in the biosynthesis of bacterial cell-wall peptidoglycan. This is UDP-N-acetylmuramoyl-L-alanyl-D-glutamate--2,6-diaminopimelate ligase from Synechococcus sp. (strain WH7803).